Consider the following 340-residue polypeptide: Galactoside alpha-(1,2)-fucosyltransferase 2 (340 aa).

At 1 to 7 (MLSMQAS) the chain is on the cytoplasmic side. The chain crosses the membrane as a helical; Signal-anchor for type II membrane protein span at residues 8-28 (FFFPTGPFILFVFTASTIFHL). At 29 to 340 (QQRMVKIQPT…EADLSPLLKH (312 aa)) the chain is on the lumenal side. Residues Asn-185, Asn-251, Asn-279, and Asn-305 are each glycosylated (N-linked (GlcNAc...) asparagine).

The protein resides in the golgi apparatus. It localises to the golgi stack membrane. It carries out the reaction a beta-D-galactosyl-(1-&gt;3)-N-acetyl-beta-D-glucosaminyl derivative + GDP-beta-L-fucose = an alpha-L-Fuc-(1-&gt;2)-beta-D-Gal-(1-&gt;3)-beta-D-GlcNAc derivative + GDP + H(+). It catalyses the reaction a beta-D-galactosyl-(1-&gt;4)-N-acetyl-beta-D-glucosaminyl derivative + GDP-beta-L-fucose = an alpha-L-Fuc-(1-&gt;2)-beta-D-Gal-(1-&gt;4)-beta-D-GlcNAc derivative + GDP + H(+). The enzyme catalyses a neolactoside nLc4Cer + GDP-beta-L-fucose = a neolactoside IV(2)-alpha-Fuc-nLc4Cer + GDP + H(+). The catalysed reaction is a neolactoside nLc4Cer(d18:1(4E)) + GDP-beta-L-fucose = a neolactoside IV(2)-alpha-Fuc-nLc4Cer(d18:1(4E)) + GDP + H(+). It carries out the reaction a ganglioside GM1 + GDP-beta-L-fucose = a ganglioside Fuc-GM1 + GDP + H(+). It catalyses the reaction a ganglioside GA1 + GDP-beta-L-fucose = a ganglioside Fuc-GA1 + GDP + H(+). The enzyme catalyses Lc4Cer + GDP-beta-L-fucose = alpha-L-fucosyl-(1-&gt;2)-beta-D-galactosyl-(1-&gt;3)-N-acetyl-beta-D-glucosaminyl-(1-&gt;3)-beta-D-galactosyl-(1-&gt;4)-beta-D-glucosyl-(1&lt;-&gt;1')-ceramide + GDP + H(+). The catalysed reaction is a beta-D-Gal-(1-&gt;3)-beta-D-GlcNAc-(1-&gt;3)-beta-D-Gal-(1-&gt;4)-beta-D-Glc-(1&lt;-&gt;1')-Cer(d18:1(4E)) + GDP-beta-L-fucose = alpha-L-fucosyl-(1-&gt;2)- beta-D-galactosyl-(1-&gt;3)-N-acetyl-beta-D-glucosaminyl-(1-&gt;3)-beta-D-galactosyl-(1-&gt;4)-beta-D-glucosyl-(1&lt;-&gt;1')-N-acylsphing-4-enine + GDP + H(+). It carries out the reaction a ganglioside GD1b + GDP-beta-L-fucose = a ganglioside Fuc-GD1b + GDP + H(+). It catalyses the reaction a ganglioside GM1 (d18:1(4E)) + GDP-beta-L-fucose = a ganglioside Fuc-GM1 (d18:1(4E)) + GDP + H(+). The enzyme catalyses a globoside GalGb4Cer (d18:1(4E)) + GDP-beta-L-fucose = a globoside Globo-H (d18:1(4E)) + GDP + H(+). The catalysed reaction is a lactoside III(4)-a-Fuc-Lc4Cer + GDP-beta-L-fucose = a lactoside IV(2),III(4)-a-[Fuc]2-Lc4Cer + GDP + H(+). It carries out the reaction beta-D-galactosyl-(1-&gt;3)-N-acetyl-D-galactosamine + GDP-beta-L-fucose = alpha-L-fucosyl-(1-&gt;2)-beta-D-galactosyl-(1-&gt;3)-N-acetyl-D-galactosamine + GDP + H(+). Its pathway is protein modification; protein glycosylation. Catalyzes the transfer of L-fucose, from a guanosine diphosphate-beta-L-fucose, to the terminal galactose on both O- and N-linked glycans chains of cell surface glycoproteins and glycolipids and the resulting epitope regulates several processes such as cell-cell interaction including host-microbe interaction, cell surface expression and cell proliferation. Preferentially fucosylates gangliosides GA1 and GM1 in the antrum, cecum and colon and in the female reproductive organs. Fucosylated host glycoproteins or glycolipids mediate interaction with intestinal microbiota influencing its composition. Creates a soluble precursor oligosaccharide FuC-alpha ((1,2)Galbeta-) called the H antigen which is an essential substrate for the final step in the soluble ABO blood group antigen synthesis pathway. This chain is Galactoside alpha-(1,2)-fucosyltransferase 2, found in Sus scrofa (Pig).